The sequence spans 146 residues: Hemoglobin subunit beta (146 aa).

The 145-residue stretch at 2 to 146 (HWSAEEKQLI…VAHALARKYH (145 aa)) folds into the Globin domain. His-63 and His-92 together coordinate heme b.

Belongs to the globin family. In terms of assembly, heterotetramer of two alpha chains and two beta chains. In terms of tissue distribution, red blood cells.

In terms of biological role, involved in oxygen transport from the lung to the various peripheral tissues. In Anser indicus (Bar-headed goose), this protein is Hemoglobin subunit beta (HBB).